We begin with the raw amino-acid sequence, 661 residues long: UvrABC system protein C (661 aa).

One can recognise a GIY-YIG domain in the interval 26 to 105 (AEPGCYLMRD…IKNHQPHFNV (80 aa)). The 36-residue stretch at 215–250 (DELQNLLQEQMHKYADRTDYESAARVRDQLQGLDQL) folds into the UVR domain.

It belongs to the UvrC family. As to quaternary structure, interacts with UvrB in an incision complex.

It is found in the cytoplasm. Functionally, the UvrABC repair system catalyzes the recognition and processing of DNA lesions. UvrC both incises the 5' and 3' sides of the lesion. The N-terminal half is responsible for the 3' incision and the C-terminal half is responsible for the 5' incision. This is UvrABC system protein C from Synechococcus sp. (strain CC9902).